Consider the following 391-residue polypeptide: Ferrochelatase (391 aa).

2 residues coordinate Fe cation: His196 and Glu281.

The protein belongs to the ferrochelatase family.

The protein resides in the cytoplasm. The catalysed reaction is heme b + 2 H(+) = protoporphyrin IX + Fe(2+). It participates in porphyrin-containing compound metabolism; protoheme biosynthesis; protoheme from protoporphyrin-IX: step 1/1. Catalyzes the ferrous insertion into protoporphyrin IX. The chain is Ferrochelatase from Synechococcus sp. (strain CC9311).